We begin with the raw amino-acid sequence, 218 residues long: uncharacterized protein (218 aa).

This is an uncharacterized protein from Mycoplasma genitalium (strain ATCC 33530 / DSM 19775 / NCTC 10195 / G37) (Mycoplasmoides genitalium).